Consider the following 326-residue polypeptide: DNA repair protein RAD51 homolog 4 (326 aa).

The preferentially binds ssDNA stretch occupies residues 1–83; that stretch reads MGVLRAGLCP…ELKTSTAILS (83 aa). 107–114 is a binding site for ATP; sequence GAPGSGKT.

The protein belongs to the RecA family. RAD51 subfamily. Part of the BCDX2 complex consisting of RAD51B, RAD51C, RAD51D and XRCC2; the complex has a ring-like structure arranged into a flat disc around a central channel. In the absence of DNA, the BCDX2 subcomplex XRCC2:RAD51D formed a multimeric ring structure; in the presence of single-stranded DNA it formed a filamentous structure with the ssDNA. Interacts with SWSAP1 and ZSWIM7; involved in homologous recombination repair. Interacts with BLM; required for stimulation of BLM activity by the BCDX2 subcomplex XRCC2:RAD51D.

The protein resides in the nucleus. In terms of biological role, involved in the homologous recombination repair (HRR) pathway of double-stranded DNA breaks arising during DNA replication or induced by DNA-damaging agents. Bind to single-stranded DNA (ssDNA) and has DNA-dependent ATPase activity. Part of the RAD51 paralog protein complex BCDX2 which acts in the BRCA1-BRCA2-dependent HR pathway. Upon DNA damage, BCDX2 acts downstream of BRCA2 recruitment and upstream of RAD51 recruitment. BCDX2 binds predominantly to the intersection of the four duplex arms of the Holliday junction and to junction of replication forks. The BCDX2 complex was originally reported to bind single-stranded DNA, single-stranded gaps in duplex DNA and specifically to nicks in duplex DNA. Involved in telomere maintenance. The BCDX2 subcomplex XRCC2:RAD51D can stimulate Holliday junction resolution by BLM. The protein is DNA repair protein RAD51 homolog 4 (RAD51D) of Bos taurus (Bovine).